The sequence spans 31 residues: Cyclotide mden-L (31 aa).

The segment at residues glycine 1–asparagine 31 is a cross-link (cyclopeptide (Gly-Asn)). 3 cysteine pairs are disulfide-bonded: cysteine 5–cysteine 21, cysteine 9–cysteine 23, and cysteine 14–cysteine 28.

Belongs to the cyclotide family. Bracelet subfamily. This is a cyclic peptide.

In terms of biological role, probably participates in a plant defense mechanism. This is Cyclotide mden-L from Melicytus dentatus (Tree violet).